Consider the following 228-residue polypeptide: Cytochrome c oxidase subunit 2 (228 aa).

Topologically, residues 1 to 14 are mitochondrial intermembrane; that stretch reads MANHSQLGFQDASS. The helical transmembrane segment at 15 to 45 threads the bilayer; sequence PIMEELVEFHDHALIVALAICSLVLYLLAHM. The Mitochondrial matrix segment spans residues 46-58; the sequence is LMEKLSSNAVDAQ. The chain crosses the membrane as a helical span at residues 59–86; sequence EVELIWTILPAIVLVLLALPSLQILYMM. At 87-228 the chain is on the mitochondrial intermembrane side; sequence DEIDEPDLTL…ETWSSLLSAS (142 aa). Residues His-160, Cys-195, Glu-197, Cys-199, His-203, and Met-206 each coordinate Cu cation. Position 197 (Glu-197) interacts with Mg(2+).

It belongs to the cytochrome c oxidase subunit 2 family. In terms of assembly, component of the cytochrome c oxidase (complex IV, CIV), a multisubunit enzyme composed of 14 subunits. The complex is composed of a catalytic core of 3 subunits MT-CO1, MT-CO2 and MT-CO3, encoded in the mitochondrial DNA, and 11 supernumerary subunits COX4I, COX5A, COX5B, COX6A, COX6B, COX6C, COX7A, COX7B, COX7C, COX8 and NDUFA4, which are encoded in the nuclear genome. The complex exists as a monomer or a dimer and forms supercomplexes (SCs) in the inner mitochondrial membrane with NADH-ubiquinone oxidoreductase (complex I, CI) and ubiquinol-cytochrome c oxidoreductase (cytochrome b-c1 complex, complex III, CIII), resulting in different assemblies (supercomplex SCI(1)III(2)IV(1) and megacomplex MCI(2)III(2)IV(2)). Found in a complex with TMEM177, COA6, COX18, COX20, SCO1 and SCO2. Interacts with TMEM177 in a COX20-dependent manner. Interacts with COX20. Interacts with COX16. Requires Cu cation as cofactor.

Its subcellular location is the mitochondrion inner membrane. The catalysed reaction is 4 Fe(II)-[cytochrome c] + O2 + 8 H(+)(in) = 4 Fe(III)-[cytochrome c] + 2 H2O + 4 H(+)(out). In terms of biological role, component of the cytochrome c oxidase, the last enzyme in the mitochondrial electron transport chain which drives oxidative phosphorylation. The respiratory chain contains 3 multisubunit complexes succinate dehydrogenase (complex II, CII), ubiquinol-cytochrome c oxidoreductase (cytochrome b-c1 complex, complex III, CIII) and cytochrome c oxidase (complex IV, CIV), that cooperate to transfer electrons derived from NADH and succinate to molecular oxygen, creating an electrochemical gradient over the inner membrane that drives transmembrane transport and the ATP synthase. Cytochrome c oxidase is the component of the respiratory chain that catalyzes the reduction of oxygen to water. Electrons originating from reduced cytochrome c in the intermembrane space (IMS) are transferred via the dinuclear copper A center (CU(A)) of subunit 2 and heme A of subunit 1 to the active site in subunit 1, a binuclear center (BNC) formed by heme A3 and copper B (CU(B)). The BNC reduces molecular oxygen to 2 water molecules using 4 electrons from cytochrome c in the IMS and 4 protons from the mitochondrial matrix. In Cairina moschata (Muscovy duck), this protein is Cytochrome c oxidase subunit 2 (MT-CO2).